A 107-amino-acid chain; its full sequence is Metallothionein-1 (107 aa).

Residues 1–2 (MD) constitute a propeptide that is removed on maturation.

The protein belongs to the metallothionein superfamily. Type 7 family.

Functionally, the metallothioneins are involved in the cellular sequestration of toxic metal ions. Binds 12 cadmium ions per molecule. In Tetrahymena pigmentosa, this protein is Metallothionein-1.